The primary structure comprises 631 residues: 2-isopropylmalate synthase 2, chloroplastic (631 aa).

A chloroplast-targeting transit peptide spans 1–46; sequence MESSILKSPNLSSPSFGVPSIPALSSSSTSPFSSLHLRSQNHRTIS. The region spanning 87 to 360 is the Pyruvate carboxyltransferase domain; that stretch reads VRIFDTTLRD…FTGIDTRHIV (274 aa). A divalent metal cation contacts are provided by Asp-96, His-293, and Asn-329.

It belongs to the alpha-IPM synthase/homocitrate synthase family. LeuA type 1 subfamily. Homotetramer. Requires Mg(2+) as cofactor. Mn(2+) is required as a cofactor. In terms of tissue distribution, expressed in roots, stems, leaves, flowers and siliques.

Its subcellular location is the plastid. The protein resides in the chloroplast. The enzyme catalyses 3-methyl-2-oxobutanoate + acetyl-CoA + H2O = (2S)-2-isopropylmalate + CoA + H(+). The protein operates within amino-acid biosynthesis; L-leucine biosynthesis; L-leucine from 3-methyl-2-oxobutanoate: step 1/4. Its activity is regulated as follows. Feedback inhibition by Leu. Functionally, catalyzes the condensation of the acetyl group of acetyl-CoA with 3-methyl-2-oxobutanoate (2-oxoisovalerate) to form 3-carboxy-3-hydroxy-4-methylpentanoate (2-isopropylmalate). Involved in Leu biosynthesis, but does not participate in the chain elongation of glucosinolates. In Arabidopsis thaliana (Mouse-ear cress), this protein is 2-isopropylmalate synthase 2, chloroplastic.